Reading from the N-terminus, the 930-residue chain is Polypeptide N-acetylgalactosaminyltransferase 5 (930 aa).

The Cytoplasmic segment spans residues 1–12 (MNKIRKFFRGSG). A helical; Signal-anchor for type II membrane protein transmembrane segment spans residues 13-35 (RVLAFIFAASVIWLLFDMAALRL). Residues 36–930 (SFSEINAGLL…KWKFEKYYEV (895 aa)) lie on the Lumenal side of the membrane. A disordered region spans residues 190–209 (KQEAPQNYNVSSDTSKQASE). Positions 193–209 (APQNYNVSSDTSKQASE) are enriched in polar residues. Residues Asn-198, Asn-213, and Asn-283 are each glycosylated (N-linked (GlcNAc...) asparagine). At Ser-285 the chain carries Phosphoserine. N-linked (GlcNAc...) asparagine glycans are attached at residues Asn-287, Asn-309, Asn-355, and Asn-387. The segment at 327–381 (DTKEVPNSKTQTVFPKLLGGSPHKQIPRNQSKTSSSPPALKKAVSQSKPTISGGL) is disordered. Polar residues predominate over residues 353 to 363 (PRNQSKTSSSP). Intrachain disulfides connect Cys-476–Cys-708, Cys-699–Cys-779, and Cys-812–Cys-825. The interval 485 to 594 (LPTTSIIMCF…VGWLEPLLER (110 aa)) is catalytic subdomain A. The substrate site is built by Asp-526 and Arg-555. N-linked (GlcNAc...) asparagine glycosylation occurs at Asn-568. Asp-578 lines the Mn(2+) pocket. Ser-579 is a substrate binding site. Residue His-580 participates in Mn(2+) binding. The catalytic subdomain B stretch occupies residues 654 to 716 (IIRCPVMAGG…PCSRVGHIFR (63 aa)). Trp-685 serves as a coordination point for substrate. Mn(2+) is bound at residue His-713. Arg-716 and Tyr-721 together coordinate substrate. N-linked (GlcNAc...) asparagine glycosylation is found at Asn-766, Asn-817, and Asn-835. A Ricin B-type lectin domain is found at 794-925 (KAPVVRASGV…MELQQKWKFE (132 aa)). Intrachain disulfides connect Cys-848-Cys-863 and Cys-898-Cys-913. Residue Asn-902 is glycosylated (N-linked (GlcNAc...) asparagine).

This sequence belongs to the glycosyltransferase 2 family. GalNAc-T subfamily. As to quaternary structure, interacts with EXT2. Does not interact with EXT1, EXTL1 or EXTL3. Requires Mn(2+) as cofactor. Expressed at low level. Not expressed before E7.5 during embryogenesis. Expressed in dental mesenchyme and tongue. Accumulates in a subset of mesenchymal cells at the ventral-most portions of the 12.5 dpc maxilla and mandible underlying the dental lamina.

It localises to the golgi apparatus membrane. It carries out the reaction L-seryl-[protein] + UDP-N-acetyl-alpha-D-galactosamine = a 3-O-[N-acetyl-alpha-D-galactosaminyl]-L-seryl-[protein] + UDP + H(+). It catalyses the reaction L-threonyl-[protein] + UDP-N-acetyl-alpha-D-galactosamine = a 3-O-[N-acetyl-alpha-D-galactosaminyl]-L-threonyl-[protein] + UDP + H(+). The protein operates within protein modification; protein glycosylation. Its function is as follows. Catalyzes the initial reaction in O-linked oligosaccharide biosynthesis, the transfer of an N-acetyl-D-galactosamine residue to a serine or threonine residue on the protein receptor. Has activity toward EA2 peptide substrate, but has a weak activity toward Muc2 or Muc1b substrates. This Mus musculus (Mouse) protein is Polypeptide N-acetylgalactosaminyltransferase 5 (Galnt5).